Here is a 188-residue protein sequence, read N- to C-terminus: Pyridoxal 5'-phosphate synthase subunit PdxT (188 aa).

Gly46–Ser48 serves as a coordination point for L-glutamine. Cys78 (nucleophile) is an active-site residue. L-glutamine is bound by residues Arg105 and Ile133–Arg134. Active-site charge relay system residues include His169 and Glu171.

This sequence belongs to the glutaminase PdxT/SNO family. In terms of assembly, in the presence of PdxS, forms a dodecamer of heterodimers. Only shows activity in the heterodimer.

The catalysed reaction is aldehydo-D-ribose 5-phosphate + D-glyceraldehyde 3-phosphate + L-glutamine = pyridoxal 5'-phosphate + L-glutamate + phosphate + 3 H2O + H(+). It catalyses the reaction L-glutamine + H2O = L-glutamate + NH4(+). The protein operates within cofactor biosynthesis; pyridoxal 5'-phosphate biosynthesis. Catalyzes the hydrolysis of glutamine to glutamate and ammonia as part of the biosynthesis of pyridoxal 5'-phosphate. The resulting ammonia molecule is channeled to the active site of PdxS. The chain is Pyridoxal 5'-phosphate synthase subunit PdxT from Thermosipho africanus (strain TCF52B).